The following is a 205-amino-acid chain: Urease accessory protein UreG (205 aa).

14–21 (GPVGSGKT) contributes to the GTP binding site.

This sequence belongs to the SIMIBI class G3E GTPase family. UreG subfamily. Homodimer. UreD, UreF and UreG form a complex that acts as a GTP-hydrolysis-dependent molecular chaperone, activating the urease apoprotein by helping to assemble the nickel containing metallocenter of UreC. The UreE protein probably delivers the nickel.

The protein localises to the cytoplasm. Facilitates the functional incorporation of the urease nickel metallocenter. This process requires GTP hydrolysis, probably effectuated by UreG. The chain is Urease accessory protein UreG from Escherichia coli.